The chain runs to 425 residues: 2,3-diketo-L-gulonate TRAP transporter large permease protein YiaN (425 aa).

The next 11 membrane-spanning stretches (helical) occupy residues 3–23 (VLIF…IAWA), 54–74 (FSLL…AGGL), 93–113 (LGYV…SAVA), 139–159 (LIAS…FIIF), 170–190 (LFMA…LTWW), 209–229 (IWHS…IIGG), 235–255 (FTPT…ATVI), 277–297 (VVMF…IAEL), 314–334 (LLFI…DLTP), 355–375 (IYFG…PPIG), and 399–419 (YVLV…LIIL).

Belongs to the TRAP transporter large permease family. The complex comprises the extracytoplasmic solute receptor protein YiaO, and the two transmembrane proteins YiaM and YiaN.

It localises to the cell inner membrane. In terms of biological role, part of the tripartite ATP-independent periplasmic (TRAP) transport system YiaMNO involved in the uptake of 2,3-diketo-L-gulonate. The polypeptide is 2,3-diketo-L-gulonate TRAP transporter large permease protein YiaN (yiaN) (Escherichia coli (strain K12)).